The sequence spans 165 residues: DASH complex subunit SPC19 (165 aa).

Residues 74–104 (GDKLRKSMGRMQRELDTLQQTYELNDLRLKK) adopt a coiled-coil conformation. A phosphoserine mark is found at Ser-107 and Ser-116. A coiled-coil region spans residues 132-165 (VMMASSTNEELEELKKLKEKKKQLENKLEILKQK).

It belongs to the DASH complex SPC19 family. Component of the DASH complex consisting of ASK1, DAD1, DAD2, DAD3, DAD4, DAM1, DUO1, HSK3, SPC19 and SPC34, with a stoichiometry of one copy of each subunit per complex. Multiple DASH complexes oligomerize to form a ring that encircles spindle microtubules and organizes the rod-like NDC80 complexes of the outer kinetochore. DASH complex oligomerization strengthens microtubule attachments. On cytoplasmic microtubules, DASH complexes appear to form patches instead of rings.

It is found in the nucleus. The protein localises to the cytoplasm. It localises to the cytoskeleton. The protein resides in the spindle. Its subcellular location is the chromosome. It is found in the centromere. The protein localises to the kinetochore. Component of the DASH complex that connects microtubules with kinetochores and couples microtubule depolymerisation to chromosome movement; it is involved in retrieving kinetochores to the spindle poles before their re-orientation on the spindle in early mitosis and allows microtubule depolymerization to pull chromosomes apart and resist detachment during anaphase. Kinetochores, consisting of a centromere-associated inner segment and a microtubule-contacting outer segment, play a crucial role in chromosome segregation by mediating the physical connection between centromeric DNA and microtubules. Kinetochores also serve as an input point for the spindle assembly checkpoint, which delays anaphase until all chromosomes have bioriented on the mitotic spindle. During spindle-kinetochore attachment, kinetochores first attach to the lateral surface of spindle microtubules, which supports the congression of chromosomes toward the middle of the dividing cell; they then slide along towards the spindle pole, a process independent of the DASH complex but requiring the NDC80 complex. When the end of a disassembling microtubule reaches the laterally attached kinetochore, the DASH complex together with the NDC80 complex and STU2 convert lateral attachment to end-on capture to produce a structure that can track with microtubule shortening and sustain attachment when tension is applied across sister kinetochores upon their biorientation. Microtubule depolymerization proceeds by protofilament splaying and induces the kinetochore-attached DASH complex to slide longitudinally, thereby helping to transduce depolymerization energy into pulling forces to disjoin chromatids. Incorrect microtubule attachments are corrected by releasing microubules from the kinetochore through phosphorylation by IPL1 of kinetochore components. Links the microtubule cytoskeleton to chromosomes during interphase. Also contributes to the poleward transport of kinetochores on microtubules following centromeric DNA replication in S-phase. This chain is DASH complex subunit SPC19 (SPC19), found in Saccharomyces cerevisiae (strain ATCC 204508 / S288c) (Baker's yeast).